The following is an 861-amino-acid chain: Probable linoleate 9S-lipoxygenase 7 (861 aa).

Positions 29 to 160 (NVLDFTDLAG…NYKSDRIFFA (132 aa)) constitute a PLAT domain. Positions 163–861 (PYLPSETPEL…GKGIPNSVSI (699 aa)) constitute a Lipoxygenase domain. Residues 220–246 (TLGGSAEYPYPRRGRTGRPPTRTDPKS) are disordered. Positions 522, 527, 713, 717, and 861 each coordinate Fe cation.

The protein belongs to the lipoxygenase family. In terms of assembly, monomer. Requires Fe cation as cofactor. Expressed in tubers. Detected in sprouts and flowers. but not in leaves or stems.

Its subcellular location is the cytoplasm. It catalyses the reaction (9Z,12Z)-octadecadienoate + O2 = (9S)-hydroperoxy-(10E,12Z)-octadecadienoate. It functions in the pathway lipid metabolism; oxylipin biosynthesis. Functionally, plant lipoxygenases may be involved in a number of diverse aspects of plant physiology including growth and development, pest resistance, and senescence or responses to wounding. Catalyzes the hydroperoxidation of lipids containing a cis,cis-1,4-pentadiene structure. In Solanum tuberosum (Potato), this protein is Probable linoleate 9S-lipoxygenase 7 (LOX1.7).